The following is a 689-amino-acid chain: Glycine--tRNA ligase beta subunit (689 aa).

It belongs to the class-II aminoacyl-tRNA synthetase family. Tetramer of two alpha and two beta subunits.

The protein localises to the cytoplasm. It catalyses the reaction tRNA(Gly) + glycine + ATP = glycyl-tRNA(Gly) + AMP + diphosphate. This chain is Glycine--tRNA ligase beta subunit, found in Actinobacillus pleuropneumoniae serotype 3 (strain JL03).